A 572-amino-acid polypeptide reads, in one-letter code: Formate--tetrahydrofolate ligase (572 aa).

An ATP-binding site is contributed by 65–72 (TPLGEGKT).

It belongs to the formate--tetrahydrofolate ligase family.

It carries out the reaction (6S)-5,6,7,8-tetrahydrofolate + formate + ATP = (6R)-10-formyltetrahydrofolate + ADP + phosphate. Its pathway is one-carbon metabolism; tetrahydrofolate interconversion. The protein is Formate--tetrahydrofolate ligase of Chloroflexus aggregans (strain MD-66 / DSM 9485).